The following is a 309-amino-acid chain: MFSPADNIFIILITGEFILGILGNGYIALVNWIDWIKKKKISTVDYILTNLVIARICLISVMVVNGIVIVLNPDVYTKNKQQIVIFTFWTFANYLNMWITTCLNVFYFLKIASSSHPLFLWLKWKIDMVVHWILLGCFAISLLVSLIAAIVLSCDYRFHAIAKHKRNITEMFHVSKIPYFEPLTLFNLFAIVPFIVSLISFFLLVRSLWRHTKQIKLYATGSRDPSTEVHVRAIKTMTSFIFFFFLYYISSILMTFSYLMTKYKLAVEFGEIAAILYPLGHSLILIVLNNKLRQTFVRMLTCRKIACMI.

The Extracellular segment spans residues 1-7 (MFSPADN). A helical membrane pass occupies residues 8–28 (IFIILITGEFILGILGNGYIA). Topologically, residues 29–50 (LVNWIDWIKKKKISTVDYILTN) are cytoplasmic. The helical transmembrane segment at 51 to 71 (LVIARICLISVMVVNGIVIVL) threads the bilayer. Topologically, residues 72 to 82 (NPDVYTKNKQQ) are extracellular. The chain crosses the membrane as a helical span at residues 83-103 (IVIFTFWTFANYLNMWITTCL). The Cytoplasmic portion of the chain corresponds to 104–131 (NVFYFLKIASSSHPLFLWLKWKIDMVVH). Residues 132-152 (WILLGCFAISLLVSLIAAIVL) form a helical membrane-spanning segment. Over 153–184 (SCDYRFHAIAKHKRNITEMFHVSKIPYFEPLT) the chain is Extracellular. N-linked (GlcNAc...) asparagine glycosylation occurs at asparagine 167. Residues 185 to 205 (LFNLFAIVPFIVSLISFFLLV) form a helical membrane-spanning segment. Residues 206–239 (RSLWRHTKQIKLYATGSRDPSTEVHVRAIKTMTS) are Cytoplasmic-facing. Residues 240–260 (FIFFFFLYYISSILMTFSYLM) traverse the membrane as a helical segment. At 261–266 (TKYKLA) the chain is on the extracellular side. The helical transmembrane segment at 267-287 (VEFGEIAAILYPLGHSLILIV) threads the bilayer. Residues 288–309 (LNNKLRQTFVRMLTCRKIACMI) lie on the Cytoplasmic side of the membrane.

Belongs to the G-protein coupled receptor T2R family. As to expression, expressed in subsets of taste receptor cells of the tongue and palate epithelium and exclusively in gustducin-positive cells.

It localises to the membrane. Receptor that may play a role in the perception of bitterness and is gustducin-linked. May play a role in sensing the chemical composition of the gastrointestinal content. The activity of this receptor may stimulate alpha gustducin, mediate PLC-beta-2 activation and lead to the gating of TRPM5. In Homo sapiens (Human), this protein is Taste receptor type 2 member 8 (TAS2R8).